The primary structure comprises 160 residues: S-ribosylhomocysteine lyase (160 aa).

Fe cation-binding residues include histidine 57, histidine 61, and cysteine 127.

Belongs to the LuxS family. In terms of assembly, homodimer. Requires Fe cation as cofactor.

It carries out the reaction S-(5-deoxy-D-ribos-5-yl)-L-homocysteine = (S)-4,5-dihydroxypentane-2,3-dione + L-homocysteine. In terms of biological role, involved in the synthesis of autoinducer 2 (AI-2) which is secreted by bacteria and is used to communicate both the cell density and the metabolic potential of the environment. The regulation of gene expression in response to changes in cell density is called quorum sensing. Catalyzes the transformation of S-ribosylhomocysteine (RHC) to homocysteine (HC) and 4,5-dihydroxy-2,3-pentadione (DPD). The chain is S-ribosylhomocysteine lyase from Streptococcus mutans serotype c (strain ATCC 700610 / UA159).